Reading from the N-terminus, the 181-residue chain is Large ribosomal subunit protein uL5c (181 aa).

Belongs to the universal ribosomal protein uL5 family. In terms of assembly, part of the 50S ribosomal subunit; contacts the 5S rRNA.

Its subcellular location is the plastid. Binds 5S rRNA, forms part of the central protuberance of the 50S subunit. This Helicosporidium sp. subsp. Simulium jonesii (Green alga) protein is Large ribosomal subunit protein uL5c (rpl5).